The following is a 343-amino-acid chain: tRNA N6-adenosine threonylcarbamoyltransferase (343 aa).

Fe cation-binding residues include H115 and H119. Residues 137-141 (IVSGG), D170, G183, D187, and N276 each bind substrate. Residue D304 coordinates Fe cation.

This sequence belongs to the KAE1 / TsaD family. It depends on Fe(2+) as a cofactor.

It is found in the cytoplasm. It catalyses the reaction L-threonylcarbamoyladenylate + adenosine(37) in tRNA = N(6)-L-threonylcarbamoyladenosine(37) in tRNA + AMP + H(+). Functionally, required for the formation of a threonylcarbamoyl group on adenosine at position 37 (t(6)A37) in tRNAs that read codons beginning with adenine. Is involved in the transfer of the threonylcarbamoyl moiety of threonylcarbamoyl-AMP (TC-AMP) to the N6 group of A37, together with TsaE and TsaB. TsaD likely plays a direct catalytic role in this reaction. The sequence is that of tRNA N6-adenosine threonylcarbamoyltransferase from Staphylococcus carnosus (strain TM300).